The sequence spans 366 residues: Tyrosine--tRNA ligase (366 aa).

Tyr-41, Tyr-167, Gln-171, Asp-174, and Gln-189 together coordinate L-tyrosine. The short motif at Lys-241 to Ser-245 is the 'KMSKS' region element. Residue Lys-244 coordinates ATP.

Belongs to the class-I aminoacyl-tRNA synthetase family. TyrS type 4 subfamily. As to quaternary structure, homodimer.

It is found in the cytoplasm. It catalyses the reaction tRNA(Tyr) + L-tyrosine + ATP = L-tyrosyl-tRNA(Tyr) + AMP + diphosphate + H(+). Its function is as follows. Catalyzes the attachment of tyrosine to tRNA(Tyr) in a two-step reaction: tyrosine is first activated by ATP to form Tyr-AMP and then transferred to the acceptor end of tRNA(Tyr). This Saccharolobus solfataricus (strain ATCC 35092 / DSM 1617 / JCM 11322 / P2) (Sulfolobus solfataricus) protein is Tyrosine--tRNA ligase.